Consider the following 612-residue polypeptide: tRNA(Met) cytidine acetyltransferase TmcA (612 aa).

Residues Q136, 161–170 (GRGKSTLLGQ), and R284 each bind ATP. The region spanning 319-499 (KHASELEEAL…PAAIYALPLT (181 aa)) is the N-acetyltransferase domain. Acetyl-CoA is bound at residue 424–426 (IAV).

It belongs to the RNA cytidine acetyltransferase family. TmcA subfamily.

The protein localises to the cytoplasm. The catalysed reaction is cytidine(34) in elongator tRNA(Met) + acetyl-CoA + ATP + H2O = N(4)-acetylcytidine(34) in elongator tRNA(Met) + ADP + phosphate + CoA + H(+). Its function is as follows. Catalyzes the formation of N(4)-acetylcytidine (ac(4)C) at the wobble position of tRNA(Met), by using acetyl-CoA as an acetyl donor and ATP (or GTP). This is tRNA(Met) cytidine acetyltransferase TmcA from Idiomarina loihiensis (strain ATCC BAA-735 / DSM 15497 / L2-TR).